The sequence spans 252 residues: Urease accessory protein UreH (252 aa).

It belongs to the UreD family. In terms of assembly, ureH, UreF and UreG form a complex that acts as a GTP-hydrolysis-dependent molecular chaperone, activating the urease apoprotein by helping to assemble the nickel containing metallocenter of UreC. The UreE protein probably delivers the nickel.

Its subcellular location is the cytoplasm. Required for maturation of urease via the functional incorporation of the urease nickel metallocenter. This chain is Urease accessory protein UreH, found in Helicobacter hepaticus (strain ATCC 51449 / 3B1).